Here is a 797-residue protein sequence, read N- to C-terminus: Phenylalanine--tRNA ligase beta subunit (797 aa).

Residues 40 to 154 (MEGLSKLVVG…ADAKVGDSIF (115 aa)) enclose the tRNA-binding domain. The B5 domain occupies 407-482 (PILPKVSITL…RIYGYDNLPS (76 aa)). Mg(2+)-binding residues include D460, D466, E469, and E470. Residues 704 to 797 (PKVQAVHRDI…LVEKLDIEIR (94 aa)) enclose the FDX-ACB domain.

This sequence belongs to the phenylalanyl-tRNA synthetase beta subunit family. Type 1 subfamily. In terms of assembly, tetramer of two alpha and two beta subunits. It depends on Mg(2+) as a cofactor.

It localises to the cytoplasm. It carries out the reaction tRNA(Phe) + L-phenylalanine + ATP = L-phenylalanyl-tRNA(Phe) + AMP + diphosphate + H(+). The polypeptide is Phenylalanine--tRNA ligase beta subunit (Lactococcus lactis subsp. lactis (strain IL1403) (Streptococcus lactis)).